Reading from the N-terminus, the 733-residue chain is MLFLILLCVTGAQAITTPAPPRPATTTPRRGVTSAPLIVPASSSELIVTLDGTFHSVTIDMTEIRQYVRQEIIEALWNASHVFESLETTYNRYKDVYRFTDQSIRVNTRGKLSTCKEVNKSTEVSFYKSITSQTINGKYDGDLGISNHQLGQQLFFYVMNVFPVENAFYPVRKHVVYSSLSLADGAYQLAGMATTNYVSLVVVRKISSTVTHEATIVFGNKKLLPSMRGSITKYDISLVNSDAEELLLLTSQKDYEYFSKNLFPQNWTDVFSLITSHTVGELAQILQTSVVDFARKGRCRSVHFNSHFLTTYLAVLSLYYKMGTEFVSKNERQISLQCILPKLYEANVCFDMVHRCFTSQYTRGFDSDGINRLSAAILGSMPFEPNQGLSVPTNWFLQTLYFVDGNLDPQNKGLHGITLILMDIYGRYVVNFTLTPEDRETLFYVYNALRGRKHLSTTMKNKYVSLIYCYTTSMCSATELAWGIEYWGEESTHSAHHSFSPCFMSLRFDYTLEKLNIEGSQDVKLTQTQLSNGVSAMYSLLTAKSSTWTIDSLSIKPCIYNASFVKMIVPFTNVSYVISQGVAAPGTTYDVAETFLKSSMVITVVSNSECYNLTASKEILKIPVVYNMTHPRIKCQLCDSVVISYDEYDGLQTMVYISNYKVQQDLFSDYSIFFDFNNMHTHYLLLMNNGTLFEIRGLYANRAMNIIIILLFTIAALAGVFIVYKIVMYMTFK.

A signal peptide spans 1–14; sequence MLFLILLCVTGAQA. The Virion surface portion of the chain corresponds to 15 to 707; the sequence is ITTPAPPRPA…LYANRAMNII (693 aa). N78 and N119 each carry an N-linked (GlcNAc...) asparagine; by host glycan. The tract at residues 185 to 249 is interaction with gL; it reads GAYQLAGMAT…NSDAEELLLL (65 aa). N-linked (GlcNAc...) asparagine; by host glycans are attached at residues N266, N431, N561, N573, N612, N627, and N689. Residues 708-728 form a helical membrane-spanning segment; sequence IILLFTIAALAGVFIVYKIVM. Topologically, residues 729–733 are intravirion; that stretch reads YMTFK.

The protein belongs to the herpesviridae glycoprotein H family. As to quaternary structure, interacts with glycoprotein L (gL); this interaction is necessary for the correct processing and cell surface expression of gH. The heterodimer gH/gL seems to interact with gB trimers during fusion. N-glycosylated, O-glycosylated, and sialylated.

The protein localises to the virion membrane. It is found in the host cell membrane. It localises to the host endosome membrane. The heterodimer glycoprotein H-glycoprotein L is required for the fusion of viral and plasma membranes leading to virus entry into the host cell. Following initial binding to host receptor, membrane fusion is mediated by the fusion machinery composed of gB and the heterodimer gH/gL. May also be involved in the fusion between the virion envelope and the outer nuclear membrane during virion morphogenesis. The polypeptide is Envelope glycoprotein H (Alcelaphine herpesvirus 1 (strain C500) (AlHV-1)).